The sequence spans 340 residues: Extracellular matrix protein-binding protein emp (340 aa).

The first 26 residues, 1-26 (MKKKLLVLTMSTLFATQLINSNHAKA), serve as a signal peptide directing secretion.

The protein localises to the cell surface. Functionally, adhesin that binds to the host cell extracellular matrix proteins fibronectin, fibrinogen, collagen, and vitronectin. The polypeptide is Extracellular matrix protein-binding protein emp (emp) (Staphylococcus aureus (strain Mu50 / ATCC 700699)).